Reading from the N-terminus, the 759-residue chain is MRTSPRRPLILKRRKLSLPHQDATPCPGASEQGKAAMMKTANLPEQTLAHELEDMAPKSKADQETPGQNEGGDTLGQSLAPTMRLPSNPPQSCPEDIPGFPSGVRIMGHPTMADAQLVIIPSQSNVQSIIQALTARGKEQGGPNKYIIISSESAIQTQAWHQGPQIKEEECVNSQSEATCISKQKPTGNSRKAKHRQEEQLNASLSNIQWLGNMSSESLGQYSIKEEQEDKENQIPECAKMEEEPQSFPDPQWPLSVTERPPYSYMALIQFAINSTPRKRMTLKDIYTWIEDHFPYFKHVAKPGWKNSIRHNLSLHDMFVRESEANNKVSYWTIHPQANRCLTLDQVFKTASPMSPADNEPQKKMIPDIRKSFQSAACASNKERKMKPLLPRVNSYLIPVHFPVAQPVLLPALEPYAFGAESSDGQQSSKRVKIAPKATADDGESPKHLGLCSVKEEPDISNLKCEDLFQCKRVSSSRRKQQLLPPHSEEPELVLPESIASDSGLDTDFSFIQDASANPNQNLTSHPTQNCPSNVTQEGLLHLTHDGPSYLTQVSSSHFTQDDPCQFTKDDTFYFTQDNPIQLTQDEDYTFKTPIKEHFSKPTTSSTPSKPTDTGLLQPWESETSLPRDPVLDFSPVRIPQGSTFTPFKDNLGTLSFGDTPFKDFGIFGSPQNLLNALSPASSPLLRLESPCVSRQQKRCSKELQVGASANRSLLEGLVLDTVDDSLSKILLDISFSGMEEGNGLEVDGVWSQFLPEFK.

The disordered stretch occupies residues 1–92 (MRTSPRRPLI…MRLPSNPPQS (92 aa)). Positions 48–63 (LAHELEDMAPKSKADQ) are enriched in basic and acidic residues. A DNA-binding region (fork-head) is located at residues 260–358 (RPPYSYMALI…KTASPMSPAD (99 aa)). Disordered stretches follow at residues 420-450 (AESSDGQQSSKRVKIAPKATADDGESPKHLG), 516-535 (SANPNQNLTSHPTQNCPSNV), and 596-631 (KEHFSKPTTSSTPSKPTDTGLLQPWESETSLPRDPV). Low complexity predominate over residues 601–612 (KPTTSSTPSKPT).

In terms of tissue distribution, localized to the animal hemisphere of early cleavage stage embryos. During neurulation, expressed in the neural folds. Later, expressed in the spinal cord and in the eye field. During tailbud stages, expression is still restricted to the neuroectoderm, predominantly to the hindbrain, the eye and the spinal cord. With ongoing development, expression is also found at lower levels in the branchial arches. At stage 35, expressed in the rhombencephalon and in the eye retina.

It localises to the nucleus. In terms of biological role, transcription factor regulating the expression of cell cycle genes essential for DNA replication and mitosis. Plays a role in the control of cell proliferation. Also plays a role in DNA break repair, participating in the DNA damage checkpoint response. Promotes transcription of PHB2. This chain is Forkhead box protein M1, found in Xenopus laevis (African clawed frog).